Reading from the N-terminus, the 202-residue chain is Putative chromophore lyase CpcV (202 aa).

Belongs to the CpcS/CpeS biliprotein lyase family.

Covalently attaches a chromophore to Cys residue(s) of phycobiliproteins. The protein is Putative chromophore lyase CpcV (cpcV) of Picosynechococcus sp. (strain ATCC 27264 / PCC 7002 / PR-6) (Agmenellum quadruplicatum).